Reading from the N-terminus, the 158-residue chain is Large ribosomal subunit protein uL11 (158 aa).

A disordered region spans residues 1 to 28; the sequence is MAGTIEALVPGGQATPGPPLGPELGPTP.

This sequence belongs to the universal ribosomal protein uL11 family. Part of the ribosomal stalk of the 50S ribosomal subunit. Interacts with L10 and the large rRNA to form the base of the stalk. L10 forms an elongated spine to which L12 dimers bind in a sequential fashion forming a multimeric L10(L12)X complex.

In terms of biological role, forms part of the ribosomal stalk which helps the ribosome interact with GTP-bound translation factors. This is Large ribosomal subunit protein uL11 from Halorubrum lacusprofundi (strain ATCC 49239 / DSM 5036 / JCM 8891 / ACAM 34).